Here is a 375-residue protein sequence, read N- to C-terminus: Glutamate 5-kinase (375 aa).

ATP is bound at residue Lys-17. 3 residues coordinate substrate: Ser-57, Asp-144, and Asn-156. 176–177 (TD) contributes to the ATP binding site. The PUA domain occupies 283 to 361 (KGELILDTGA…DEIEGILGYV (79 aa)).

The protein belongs to the glutamate 5-kinase family.

It is found in the cytoplasm. The enzyme catalyses L-glutamate + ATP = L-glutamyl 5-phosphate + ADP. The protein operates within amino-acid biosynthesis; L-proline biosynthesis; L-glutamate 5-semialdehyde from L-glutamate: step 1/2. Functionally, catalyzes the transfer of a phosphate group to glutamate to form L-glutamate 5-phosphate. In Thioalkalivibrio sulfidiphilus (strain HL-EbGR7), this protein is Glutamate 5-kinase.